The chain runs to 458 residues: MEASVLSPTSWEKRRAWLRQSRNWQTQVLEEEAAAALQDALDPEPSSLDDVFQEGNPINKIEDWLQGCGCRDTEEGLSEESGQSNYSGYSSHGTSFEDDLSLGAEATLLSTNGNLFSRNFLQTPRLCQLLDLGSSLASSSMTGGTNKTSSSISEILDQVQEDAEDILFSLGFGHENHKDTSRIPARFFSNPSQAKGINFQLFLKSQVQRMEMEDPCLMLASRFKQVQTLAVTADAFFCLYSYVSKTPVQKFTPSNMFWNFDPTDVPSIRILAPEPEPYSPRERLRRAISKMCLYTGSRDRLSSSYNNPKKNSLDQIVWEVMDRVKGEKIQQDPEHRQALGEESVPPIQNTNPSTSSLPCVSYPKEETQGDMCHAHALARPGPQYHINSTQVRRQLWVLQDINEKPRSAENESPWERKSKARKNLFQRVPVDKNIKSLNLPTIQQKQNQGQARHELTNL.

Serine 312 is subject to Phosphoserine. The span at 328–339 (KIQQDPEHRQAL) shows a compositional bias: basic and acidic residues. 2 disordered regions span residues 328–356 (KIQQDPEHRQALGEESVPPIQNTNPSTSS) and 439–458 (LPTIQQKQNQGQARHELTNL). Polar residues-rich tracts occupy residues 346–356 (PIQNTNPSTSS) and 439–450 (LPTIQQKQNQGQ).

Interacts with PLCG1 and GRB2; the association is increased with prolonged stimulation of the TCR and may facilitate the assembly of the LAT signalosome. Interacts with ITPR1 and ITPR3. Interacts with HSPA9. In terms of processing, may be phosphorylated in response to store-operated Ca(+2) entry. In terms of tissue distribution, expressed in lymphoid tissues, with highest expression levels detected in thymus and lower levels in spleen and lymph nodes (at protein level). Detected in CD4(+) and CD8(+) T-cells, B-cells and mast cells. Not detected in monocytes/macrophages.

Its subcellular location is the cytoplasm. The protein resides in the endoplasmic reticulum membrane. May play a role in the regulation of inositol 1,4,5-trisphosphate receptor-mediated Ca(2+) release and mitochondrial Ca(2+) uptake via the mitochondria-associated endoplasmic reticulum membrane (MAM) compartment. Required for the development and maturation of T-cells, its function being essential for the late stages of thymocyte development. Plays a role in T-cell antigen receptor (TCR)-mediated activation of the ERK and NFAT signaling pathways, possibly by serving as a scaffolding protein that promotes the assembly of the LAT signalosome in thymocytes. In Mus musculus (Mouse), this protein is Protein TESPA1 (Tespa1).